A 449-amino-acid chain; its full sequence is Myb family transcription factor PHL6 (449 aa).

The interval 49–72 is disordered; the sequence is PFIRSQSPDSPGQLWPKNSSQSTF. The region spanning 238–298 is the HTH myb-type domain; the sequence is ANQKSRMRWT…HLQKYRLAKY (61 aa). The segment at residues 269-294 is a DNA-binding region (H-T-H motif); the sequence is PKAVKKLMNVEGLTIYHVKSHLQKYR. Positions 301-327 are disordered; it reads EKKEEKRTDNSEEKKLALSKSEADEKK. The interval 334-354 is coiled coil; it reads TEALRMQMEVQKQLHEQLEVQ. Residues 347 to 352 carry the LHEQLE motif; it reads LHEQLE. The segment at 376-449 is disordered; it reads RKTGRWISSS…NIAESEDPKR (74 aa). A compositionally biased stretch (polar residues) spans 381–410; that stretch reads WISSSSQTVLSPSDDSIPDSQNMSKTKASS.

The protein belongs to the MYB-CC family.

The protein resides in the nucleus. This chain is Myb family transcription factor PHL6, found in Arabidopsis thaliana (Mouse-ear cress).